Here is a 141-residue protein sequence, read N- to C-terminus: ATP synthase epsilon chain (141 aa).

It belongs to the ATPase epsilon chain family. In terms of assembly, F-type ATPases have 2 components, CF(1) - the catalytic core - and CF(0) - the membrane proton channel. CF(1) has five subunits: alpha(3), beta(3), gamma(1), delta(1), epsilon(1). CF(0) has three main subunits: a, b and c.

It localises to the cell inner membrane. Functionally, produces ATP from ADP in the presence of a proton gradient across the membrane. In Thioalkalivibrio sulfidiphilus (strain HL-EbGR7), this protein is ATP synthase epsilon chain.